Consider the following 239-residue polypeptide: Fatty acid metabolism regulator protein (239 aa).

In terms of domain architecture, HTH gntR-type spans 6 to 74 (KGPASFAEKY…HGKPTRVNNF (69 aa)). Residues 34–53 (ERELSELIGVTRTTLREVLQ) constitute a DNA-binding region (H-T-H motif).

In terms of assembly, homodimer.

It is found in the cytoplasm. Its function is as follows. Multifunctional regulator of fatty acid metabolism. The chain is Fatty acid metabolism regulator protein from Shewanella pealeana (strain ATCC 700345 / ANG-SQ1).